We begin with the raw amino-acid sequence, 48 residues long: MTNKNDGKDMRKNAPKGDNPGQPEPLDGSKKVKNRNHTRQKHNTSHDM.

Positions 1–12 (MTNKNDGKDMRK) are enriched in basic and acidic residues. The tract at residues 1-48 (MTNKNDGKDMRKNAPKGDNPGQPEPLDGSKKVKNRNHTRQKHNTSHDM) is disordered. The span at 31-48 (KVKNRNHTRQKHNTSHDM) shows a compositional bias: basic residues.

Belongs to the SspP family.

It is found in the spore core. In Geobacillus kaustophilus (strain HTA426), this protein is Small, acid-soluble spore protein P.